We begin with the raw amino-acid sequence, 221 residues long: 7-cyano-7-deazaguanine synthase (221 aa).

L8 to I18 serves as a coordination point for ATP. 4 residues coordinate Zn(2+): C186, C196, C199, and C202.

Belongs to the QueC family. Zn(2+) serves as cofactor.

It carries out the reaction 7-carboxy-7-deazaguanine + NH4(+) + ATP = 7-cyano-7-deazaguanine + ADP + phosphate + H2O + H(+). It functions in the pathway purine metabolism; 7-cyano-7-deazaguanine biosynthesis. In terms of biological role, catalyzes the ATP-dependent conversion of 7-carboxy-7-deazaguanine (CDG) to 7-cyano-7-deazaguanine (preQ(0)). The sequence is that of 7-cyano-7-deazaguanine synthase from Stenotrophomonas maltophilia (strain K279a).